A 65-amino-acid chain; its full sequence is Non-structural protein 5a (65 aa).

This Avian infectious bronchitis virus (strain Beaudette) (IBV) protein is Non-structural protein 5a.